Consider the following 123-residue polypeptide: Protein Wnt-3b (123 aa).

The O-palmitoleoyl serine; by PORCN moiety is linked to residue S1. A disulfide bridge connects residues C89 and C104. N90 carries an N-linked (GlcNAc...) asparagine glycan.

It belongs to the Wnt family. Palmitoleoylation is required for efficient binding to frizzled receptors. Depalmitoleoylation leads to Wnt signaling pathway inhibition.

The protein resides in the secreted. The protein localises to the extracellular space. Its subcellular location is the extracellular matrix. Ligand for members of the frizzled family of seven transmembrane receptors. Probable developmental protein. May be a signaling molecule which affects the development of discrete regions of tissues. Is likely to signal over only few cell diameters. The sequence is that of Protein Wnt-3b (WNT-3B) from Plethodon jordani (Red-cheeked salamander).